We begin with the raw amino-acid sequence, 719 residues long: Photosystem I P700 chlorophyll a apoprotein A1 (719 aa).

8 helical membrane passes run 60–83, 146–169, 185–209, 281–299, 336–359, 375–401, 423–445, and 521–539; these read IFSAHFGQLSIIFIWLSGMYFHGA, LYCTAIGALIFAGLMLFAGWFHYH, LNHHLAGLLGLGSLGWAGHQVHVSL, TAHHHIAIAVLFLIAGHMY, WHAQLAVNLAMLGSLTIIVAHHMY, LSLFTHHMWIGGFLVVGAAAHAAIFMV, AIISHLNWVCIFLGFHSFGLYIH, and FLVHHIHAFTIHVTVLILL. [4Fe-4S] cluster contacts are provided by cysteine 563 and cysteine 572. The next 2 membrane-spanning stretches (helical) occupy residues 579 to 600 and 654 to 676; these read HVFLGLFWMYNSISVVIFHFSW and LSAYGLLFLGAHFVWAFSLMFLF. Histidine 665 contributes to the chlorophyll a' binding site. Residues methionine 673 and tyrosine 681 each contribute to the chlorophyll a site. Tryptophan 682 contacts phylloquinone. The helical transmembrane segment at 714-719 threads the bilayer; the sequence is AVGVAH.

It belongs to the PsaA/PsaB family. The PsaA/B heterodimer binds the P700 chlorophyll special pair and subsequent electron acceptors. PSI consists of a core antenna complex that captures photons, and an electron transfer chain that converts photonic excitation into a charge separation. The eukaryotic PSI reaction center is composed of at least 11 subunits. It depends on P700 is a chlorophyll a/chlorophyll a' dimer, A0 is one or more chlorophyll a, A1 is one or both phylloquinones and FX is a shared 4Fe-4S iron-sulfur center. as a cofactor.

The protein localises to the plastid. Its subcellular location is the chloroplast thylakoid membrane. The enzyme catalyses reduced [plastocyanin] + hnu + oxidized [2Fe-2S]-[ferredoxin] = oxidized [plastocyanin] + reduced [2Fe-2S]-[ferredoxin]. PsaA and PsaB bind P700, the primary electron donor of photosystem I (PSI), as well as the electron acceptors A0, A1 and FX. PSI is a plastocyanin-ferredoxin oxidoreductase, converting photonic excitation into a charge separation, which transfers an electron from the donor P700 chlorophyll pair to the spectroscopically characterized acceptors A0, A1, FX, FA and FB in turn. Oxidized P700 is reduced on the lumenal side of the thylakoid membrane by plastocyanin. The polypeptide is Photosystem I P700 chlorophyll a apoprotein A1 (Equisetum palustre (Marsh horsetail)).